The sequence spans 372 residues: Ligninase H2 (372 aa).

Positions 1–21 (MAFKQLLAALSVALTLQVTQA) are cleaved as a signal peptide. Positions 22 to 28 (APNLDKR) are excised as a propeptide. Disulfide bonds link C31–C44, C43–C314, C63–C149, and C278–C344. H76 functions as the Proton acceptor in the catalytic mechanism. Residues D77, G95, D97, and S99 each coordinate Ca(2+). H205 contributes to the heme b binding site. Ca(2+) contacts are provided by S206, D223, T225, Q228, and D230. N286 carries an N-linked (GlcNAc...) asparagine glycan.

Belongs to the peroxidase family. Ligninase subfamily. It depends on heme b as a cofactor. Ca(2+) is required as a cofactor.

It carries out the reaction 1-(3,4-dimethoxyphenyl)-2-(2-methoxyphenoxy)propane-1,3-diol + H2O2 = 3,4-dimethoxybenzaldehyde + guaiacol + glycolaldehyde + H2O. The catalysed reaction is 2 (3,4-dimethoxyphenyl)methanol + H2O2 = 2 (3,4-dimethoxyphenyl)methanol radical + 2 H2O. It participates in secondary metabolite metabolism; lignin degradation. In terms of biological role, depolymerization of lignin. Catalyzes the C(alpha)-C(beta) cleavage of the propyl side chains of lignin. This chain is Ligninase H2 (GLG4), found in Phanerodontia chrysosporium (White-rot fungus).